Here is a 907-residue protein sequence, read N- to C-terminus: Protein translocase subunit SecA (907 aa).

ATP contacts are provided by residues Gln87, 105–109, and Asp513; that span reads GEGKT. The segment covering 841 to 853 has biased composition (basic and acidic residues); sequence EAQRRAQAEEAAR. Positions 841–907 are disordered; sequence EAQRRAQAEE…KYKQCHGQIN (67 aa). The segment covering 854 to 865 has biased composition (low complexity); it reads RAQAQHASAQSQ. Basic and acidic residues predominate over residues 872-887; sequence EGHHQPVVRDERKVGR. Positions 891, 893, 902, and 903 each coordinate Zn(2+).

It belongs to the SecA family. As to quaternary structure, monomer and homodimer. Part of the essential Sec protein translocation apparatus which comprises SecA, SecYEG and auxiliary proteins SecDF-YajC and YidC. The cofactor is Zn(2+).

It is found in the cell inner membrane. It localises to the cytoplasm. The enzyme catalyses ATP + H2O + cellular proteinSide 1 = ADP + phosphate + cellular proteinSide 2.. Part of the Sec protein translocase complex. Interacts with the SecYEG preprotein conducting channel. Has a central role in coupling the hydrolysis of ATP to the transfer of proteins into and across the cell membrane, serving both as a receptor for the preprotein-SecB complex and as an ATP-driven molecular motor driving the stepwise translocation of polypeptide chains across the membrane. This is Protein translocase subunit SecA from Vibrio vulnificus (strain CMCP6).